We begin with the raw amino-acid sequence, 205 residues long: Holliday junction branch migration complex subunit RuvA (205 aa).

The interval 1 to 64 (MIGKLKGTID…EDQLKLFGFL (64 aa)) is domain I. Residues 65 to 143 (SALEREWFRL…AFVGEMAPSI (79 aa)) are domain II. The segment at 144–153 (GLKQELGEGV) is flexible linker. Residues 153–205 (VAAAPVSDAVSALTNLGYSRDQAANAVAAALKNGGEGADSARLIRLGLKELSR) are domain III.

The protein belongs to the RuvA family. Homotetramer. Forms an RuvA(8)-RuvB(12)-Holliday junction (HJ) complex. HJ DNA is sandwiched between 2 RuvA tetramers; dsDNA enters through RuvA and exits via RuvB. An RuvB hexamer assembles on each DNA strand where it exits the tetramer. Each RuvB hexamer is contacted by two RuvA subunits (via domain III) on 2 adjacent RuvB subunits; this complex drives branch migration. In the full resolvosome a probable DNA-RuvA(4)-RuvB(12)-RuvC(2) complex forms which resolves the HJ.

The protein resides in the cytoplasm. Its function is as follows. The RuvA-RuvB-RuvC complex processes Holliday junction (HJ) DNA during genetic recombination and DNA repair, while the RuvA-RuvB complex plays an important role in the rescue of blocked DNA replication forks via replication fork reversal (RFR). RuvA specifically binds to HJ cruciform DNA, conferring on it an open structure. The RuvB hexamer acts as an ATP-dependent pump, pulling dsDNA into and through the RuvAB complex. HJ branch migration allows RuvC to scan DNA until it finds its consensus sequence, where it cleaves and resolves the cruciform DNA. This Sinorhizobium medicae (strain WSM419) (Ensifer medicae) protein is Holliday junction branch migration complex subunit RuvA.